We begin with the raw amino-acid sequence, 285 residues long: Sulfotransferase 2A1 (285 aa).

Residues Lys44, Ser45, Gly46, Thr47, Asn48, and Trp49 each coordinate 3'-phosphoadenylyl sulfate. His99 (proton acceptor) is an active-site residue. 3'-phosphoadenylyl sulfate-binding residues include Arg121, Ser129, Tyr184, Ser218, Met223, Arg247, Lys248, and Gly249. Phosphoserine is present on Ser251.

The protein belongs to the sulfotransferase 1 family. Homodimer. Post-translationally, the N-terminus is blocked. As to expression, liver, adrenal and at lower level in the kidney. Is present in human fetus in higher level in the adrenal than the liver and the kidney.

The protein localises to the cytoplasm. It catalyses the reaction an alcohol + 3'-phosphoadenylyl sulfate = an alkyl sulfate + adenosine 3',5'-bisphosphate + H(+). It carries out the reaction (24S)-hydroxycholesterol + 3'-phosphoadenylyl sulfate = (24S)-hydroxycholesterol 24-sulfate + adenosine 3',5'-bisphosphate + H(+). The enzyme catalyses (24S)-hydroxycholesterol + 3'-phosphoadenylyl sulfate = (24S)-hydroxycholesterol 3-sulfate + adenosine 3',5'-bisphosphate + H(+). The catalysed reaction is (24S)-hydroxycholesterol 24-sulfate + 3'-phosphoadenylyl sulfate = (24S)-hydroxycholesterol 3,24-disulfate + adenosine 3',5'-bisphosphate + H(+). It catalyses the reaction 3beta-hydroxyandrost-5-en-17-one + 3'-phosphoadenylyl sulfate = dehydroepiandrosterone 3-sulfate + adenosine 3',5'-bisphosphate + H(+). It carries out the reaction pregnenolone + 3'-phosphoadenylyl sulfate = pregnenolone sulfate + adenosine 3',5'-bisphosphate + H(+). The enzyme catalyses androsterone + 3'-phosphoadenylyl sulfate = androsterone 3alpha-sulfate + adenosine 3',5'-bisphosphate + H(+). The catalysed reaction is taurolithocholate + 3'-phosphoadenylyl sulfate = taurolithocholate 3-sulfate + adenosine 3',5'-bisphosphate + H(+). It catalyses the reaction lithocholate + 3'-phosphoadenylyl sulfate = lithocholate sulfate + adenosine 3',5'-bisphosphate + H(+). With respect to regulation, subject to substrate inhibition. Alternate orientations for binding of steroid substrates to SULT2A1 may play a role in substrate inhibition. Functionally, sulfotransferase that utilizes 3'-phospho-5'-adenylyl sulfate (PAPS) as sulfonate donor to catalyze the sulfonation of steroids and bile acids in the liver and adrenal glands. Mediates the sulfation of a wide range of steroids and sterols, including pregnenolone, androsterone, DHEA, bile acids, cholesterol and as well many xenobiotics that contain alcohol and phenol functional groups. Sulfonation increases the water solubility of most compounds, and therefore their renal excretion, but it can also result in bioactivation to form active metabolites. Plays an important role in maintening steroid and lipid homeostasis. Plays a key role in bile acid metabolism. In addition, catalyzes the metabolic activation of potent carcinogenic polycyclic arylmethanols. The sequence is that of Sulfotransferase 2A1 (SULT2A1) from Homo sapiens (Human).